The chain runs to 1107 residues: Enolase-phosphatase E1 (1107 aa).

Residues D19 and E21 each contribute to the Mg(2+) site. Substrate is bound by residues 152-153 and K186; that span reads SS. Residue D211 coordinates Mg(2+). The tract at residues 258–1107 is disordered; sequence SVKSTETENG…SATPSVETES (850 aa). Residues 260–289 are compositionally biased toward basic and acidic residues; sequence KSTETENGAEKETVTESTEKVADESEKETE. Residues 291–306 show a composition bias toward low complexity; that stretch reads ETAAAETENGAEAENG. Residues 366–376 show a composition bias toward acidic residues; it reads DAMDVDAEMTD. 2 stretches are compositionally biased toward basic and acidic residues: residues 393 to 427 and 435 to 462; these read VTEK…DTKQ and GEDK…KEEE. A compositionally biased stretch (acidic residues) spans 475–485; the sequence is DKMDVDEEDSA. 6 stretches are compositionally biased toward basic and acidic residues: residues 486–512, 534–548, 572–586, 593–604, 610–686, and 693–776; these read VIEK…KEEN, DETK…KEES, TVEK…SKSE, TSEKKVEDKSAN, KEPK…EVKA, and DESK…KSVD. The span at 794–803 shows a compositional bias: low complexity; that stretch reads EETSATTEAQ. Composition is skewed to basic and acidic residues over residues 804–838 and 849–908; these read ATKE…DAKS and KEMK…ETKG. Low complexity predominate over residues 909 to 919; sequence VEATTAGPVEE. Acidic residues predominate over residues 920–935; sequence VAVEATEEDVAMEAES. Basic and acidic residues-rich tracts occupy residues 937-957, 1001-1028, and 1035-1047; these read DAVK…KLDS, DEVK…EADS, and NHDE…KEND. The segment covering 1048–1083 has biased composition (low complexity); the sequence is TSASNIEEASSATTTTTNGTSTESDSSSTTPSSETV.

This sequence belongs to the HAD-like hydrolase superfamily. MasA/MtnC family. Monomer. Mg(2+) is required as a cofactor.

The protein resides in the cytoplasm. Its subcellular location is the nucleus. It carries out the reaction 5-methylsulfanyl-2,3-dioxopentyl phosphate + H2O = 1,2-dihydroxy-5-(methylsulfanyl)pent-1-en-3-one + phosphate. It functions in the pathway amino-acid biosynthesis; L-methionine biosynthesis via salvage pathway; L-methionine from S-methyl-5-thio-alpha-D-ribose 1-phosphate: step 3/6. The protein operates within amino-acid biosynthesis; L-methionine biosynthesis via salvage pathway; L-methionine from S-methyl-5-thio-alpha-D-ribose 1-phosphate: step 4/6. Functionally, bifunctional enzyme that catalyzes the enolization of 2,3-diketo-5-methylthiopentyl-1-phosphate (DK-MTP-1-P) into the intermediate 2-hydroxy-3-keto-5-methylthiopentenyl-1-phosphate (HK-MTPenyl-1-P), which is then dephosphorylated to form the acireductone 1,2-dihydroxy-3-keto-5-methylthiopentene (DHK-MTPene). This Aedes aegypti (Yellowfever mosquito) protein is Enolase-phosphatase E1.